We begin with the raw amino-acid sequence, 62 residues long: Photosystem II reaction center protein Z (62 aa).

The next 2 membrane-spanning stretches (helical) occupy residues 8-28 (TMFA…ITFA) and 41-61 (FSGV…NSFI).

This sequence belongs to the PsbZ family. PSII is composed of 1 copy each of membrane proteins PsbA, PsbB, PsbC, PsbD, PsbE, PsbF, PsbH, PsbI, PsbJ, PsbK, PsbL, PsbM, PsbT, PsbY, PsbZ, Psb30/Ycf12, at least 3 peripheral proteins of the oxygen-evolving complex and a large number of cofactors. It forms dimeric complexes.

It localises to the plastid. It is found in the chloroplast thylakoid membrane. Functionally, may control the interaction of photosystem II (PSII) cores with the light-harvesting antenna, regulates electron flow through the 2 photosystem reaction centers. PSII is a light-driven water plastoquinone oxidoreductase, using light energy to abstract electrons from H(2)O, generating a proton gradient subsequently used for ATP formation. The chain is Photosystem II reaction center protein Z from Welwitschia mirabilis (Tree tumbo).